The sequence spans 546 residues: MAELTISSDEIRSAIANYTSSYSAEASREEVGVVISAADGIAQVSGLPSVMANELLEFPGGVIGVAQNLDTDSVGVVVLGNYELLKEGDQVRRTGDVLSIPVGEKFLGRVINPLGQPIDGLGEIVAEEDRVLELQAPSVLERQPVEEPMATGIKAIDAMTPIGRGQRQLIIGDRKTGKTAVCVDTILNQKANWETGDKTKQVRCIYVAIGQKGSTIAALRKTLEEQGALEYTTIVAAPASDAAGFKWLAPFAGAALAQHWMYQGNHVLVIYDDLTKQAEAYRAISLLLRRPPGREAYPGDVFYLHSRLLERAAKLSDDLGAGSITALPIIETKANDVSAFIPTNVISITDGQVFLESDLFNRGVRPAINVGISVSRVGGAAQTKGMKKVAGSLRLDLAAYRDLEAFATFASDLDAASKAQLERGQRLVQLLIQSENAPQAVEYQIISLWLAGEGAFDNVPVDDVRRFETELHEYLGSNAPQVYEQIAGGAVLSDESKETLLQATEQFKGTFQTTDGTRIINEPEVDALDAGQVRKDQLTVSRKVGK.

Glycine 172–threonine 179 is a binding site for ATP.

The protein belongs to the ATPase alpha/beta chains family. F-type ATPases have 2 components, CF(1) - the catalytic core - and CF(0) - the membrane proton channel. CF(1) has five subunits: alpha(3), beta(3), gamma(1), delta(1), epsilon(1). CF(0) has three main subunits: a(1), b(2) and c(9-12). The alpha and beta chains form an alternating ring which encloses part of the gamma chain. CF(1) is attached to CF(0) by a central stalk formed by the gamma and epsilon chains, while a peripheral stalk is formed by the delta and b chains.

It is found in the cell membrane. The enzyme catalyses ATP + H2O + 4 H(+)(in) = ADP + phosphate + 5 H(+)(out). Produces ATP from ADP in the presence of a proton gradient across the membrane. The alpha chain is a regulatory subunit. This Corynebacterium efficiens (strain DSM 44549 / YS-314 / AJ 12310 / JCM 11189 / NBRC 100395) protein is ATP synthase subunit alpha.